A 360-amino-acid polypeptide reads, in one-letter code: tRNA-specific 2-thiouridylase MnmA (360 aa).

ATP contacts are provided by residues 9–16 and Leu-35; that span reads AMSGGVDS. Cys-104 serves as the catalytic Nucleophile. Cys-104 and Cys-197 form a disulfide bridge. Residue Gly-128 coordinates ATP. The interval 147–149 is interaction with tRNA; sequence KDQ. Residue Cys-197 is the Cysteine persulfide intermediate of the active site.

The protein belongs to the MnmA/TRMU family.

The protein localises to the cytoplasm. It carries out the reaction S-sulfanyl-L-cysteinyl-[protein] + uridine(34) in tRNA + AH2 + ATP = 2-thiouridine(34) in tRNA + L-cysteinyl-[protein] + A + AMP + diphosphate + H(+). Its function is as follows. Catalyzes the 2-thiolation of uridine at the wobble position (U34) of tRNA, leading to the formation of s(2)U34. This Salinispora tropica (strain ATCC BAA-916 / DSM 44818 / JCM 13857 / NBRC 105044 / CNB-440) protein is tRNA-specific 2-thiouridylase MnmA.